We begin with the raw amino-acid sequence, 277 residues long: 4-hydroxy-3-methylbut-2-enyl diphosphate reductase (277 aa).

Residue cysteine 12 participates in [4Fe-4S] cluster binding. Residues histidine 36 and histidine 70 each contribute to the (2E)-4-hydroxy-3-methylbut-2-enyl diphosphate site. 2 residues coordinate dimethylallyl diphosphate: histidine 36 and histidine 70. 2 residues coordinate isopentenyl diphosphate: histidine 36 and histidine 70. Cysteine 92 contributes to the [4Fe-4S] cluster binding site. (2E)-4-hydroxy-3-methylbut-2-enyl diphosphate is bound at residue histidine 120. Histidine 120 serves as a coordination point for dimethylallyl diphosphate. Position 120 (histidine 120) interacts with isopentenyl diphosphate. Catalysis depends on glutamate 122, which acts as the Proton donor. A (2E)-4-hydroxy-3-methylbut-2-enyl diphosphate-binding site is contributed by threonine 160. [4Fe-4S] cluster is bound at residue cysteine 188. 4 residues coordinate (2E)-4-hydroxy-3-methylbut-2-enyl diphosphate: serine 216, serine 217, asparagine 218, and serine 260. Dimethylallyl diphosphate contacts are provided by serine 216, serine 217, asparagine 218, and serine 260. Isopentenyl diphosphate-binding residues include serine 216, serine 217, asparagine 218, and serine 260.

The protein belongs to the IspH family. Requires [4Fe-4S] cluster as cofactor.

It carries out the reaction isopentenyl diphosphate + 2 oxidized [2Fe-2S]-[ferredoxin] + H2O = (2E)-4-hydroxy-3-methylbut-2-enyl diphosphate + 2 reduced [2Fe-2S]-[ferredoxin] + 2 H(+). The catalysed reaction is dimethylallyl diphosphate + 2 oxidized [2Fe-2S]-[ferredoxin] + H2O = (2E)-4-hydroxy-3-methylbut-2-enyl diphosphate + 2 reduced [2Fe-2S]-[ferredoxin] + 2 H(+). It participates in isoprenoid biosynthesis; dimethylallyl diphosphate biosynthesis; dimethylallyl diphosphate from (2E)-4-hydroxy-3-methylbutenyl diphosphate: step 1/1. It functions in the pathway isoprenoid biosynthesis; isopentenyl diphosphate biosynthesis via DXP pathway; isopentenyl diphosphate from 1-deoxy-D-xylulose 5-phosphate: step 6/6. In terms of biological role, catalyzes the conversion of 1-hydroxy-2-methyl-2-(E)-butenyl 4-diphosphate (HMBPP) into a mixture of isopentenyl diphosphate (IPP) and dimethylallyl diphosphate (DMAPP). Acts in the terminal step of the DOXP/MEP pathway for isoprenoid precursor biosynthesis. The protein is 4-hydroxy-3-methylbut-2-enyl diphosphate reductase of Sulfurovum sp. (strain NBC37-1).